A 373-amino-acid chain; its full sequence is Anhydro-N-acetylmuramic acid kinase (373 aa).

Residue 12 to 19 participates in ATP binding; the sequence is GTSLDGVD.

Belongs to the anhydro-N-acetylmuramic acid kinase family.

The enzyme catalyses 1,6-anhydro-N-acetyl-beta-muramate + ATP + H2O = N-acetyl-D-muramate 6-phosphate + ADP + H(+). It functions in the pathway amino-sugar metabolism; 1,6-anhydro-N-acetylmuramate degradation. Its pathway is cell wall biogenesis; peptidoglycan recycling. Its function is as follows. Catalyzes the specific phosphorylation of 1,6-anhydro-N-acetylmuramic acid (anhMurNAc) with the simultaneous cleavage of the 1,6-anhydro ring, generating MurNAc-6-P. Is required for the utilization of anhMurNAc either imported from the medium or derived from its own cell wall murein, and thus plays a role in cell wall recycling. This is Anhydro-N-acetylmuramic acid kinase from Serratia proteamaculans (strain 568).